Reading from the N-terminus, the 304-residue chain is UDP-3-O-acyl-N-acetylglucosamine deacetylase (304 aa).

Residues His-78, His-237, and Asp-241 each contribute to the Zn(2+) site. The active-site Proton donor is the His-264.

It belongs to the LpxC family. Zn(2+) is required as a cofactor.

It catalyses the reaction a UDP-3-O-[(3R)-3-hydroxyacyl]-N-acetyl-alpha-D-glucosamine + H2O = a UDP-3-O-[(3R)-3-hydroxyacyl]-alpha-D-glucosamine + acetate. It functions in the pathway glycolipid biosynthesis; lipid IV(A) biosynthesis; lipid IV(A) from (3R)-3-hydroxytetradecanoyl-[acyl-carrier-protein] and UDP-N-acetyl-alpha-D-glucosamine: step 2/6. Functionally, catalyzes the hydrolysis of UDP-3-O-myristoyl-N-acetylglucosamine to form UDP-3-O-myristoylglucosamine and acetate, the committed step in lipid A biosynthesis. In Methylococcus capsulatus (strain ATCC 33009 / NCIMB 11132 / Bath), this protein is UDP-3-O-acyl-N-acetylglucosamine deacetylase.